The following is a 281-amino-acid chain: Glyoxalase 1 (281 aa).

VOC domains are found at residues Arg4–Ala127 and Lys132–Asp251.

This sequence belongs to the glyoxalase I family.

Its function is as follows. Thought to act as a glyoxalase. May remove methylglyoxal from mitochondrial proteins. Has roles in reducing oxidative stress and increasing lifespan. The sequence is that of Glyoxalase 1 from Caenorhabditis briggsae.